The sequence spans 167 residues: Peptide deformylase (167 aa).

Fe cation is bound by residues cysteine 91 and histidine 133. Residue glutamate 134 is part of the active site. Histidine 137 lines the Fe cation pocket.

This sequence belongs to the polypeptide deformylase family. Fe(2+) is required as a cofactor.

The enzyme catalyses N-terminal N-formyl-L-methionyl-[peptide] + H2O = N-terminal L-methionyl-[peptide] + formate. Functionally, removes the formyl group from the N-terminal Met of newly synthesized proteins. Requires at least a dipeptide for an efficient rate of reaction. N-terminal L-methionine is a prerequisite for activity but the enzyme has broad specificity at other positions. This is Peptide deformylase from Neisseria gonorrhoeae (strain ATCC 700825 / FA 1090).